Here is a 165-residue protein sequence, read N- to C-terminus: 6,7-dimethyl-8-ribityllumazine synthase (165 aa).

5-amino-6-(D-ribitylamino)uracil-binding positions include Y30, 61 to 63 (ALE), and 90 to 92 (VVI). 95-96 (ET) contacts (2S)-2-hydroxy-3-oxobutyl phosphate. Residue H98 is the Proton donor of the active site. N123 contacts 5-amino-6-(D-ribitylamino)uracil. Residue R137 coordinates (2S)-2-hydroxy-3-oxobutyl phosphate.

It belongs to the DMRL synthase family.

The catalysed reaction is (2S)-2-hydroxy-3-oxobutyl phosphate + 5-amino-6-(D-ribitylamino)uracil = 6,7-dimethyl-8-(1-D-ribityl)lumazine + phosphate + 2 H2O + H(+). Its pathway is cofactor biosynthesis; riboflavin biosynthesis; riboflavin from 2-hydroxy-3-oxobutyl phosphate and 5-amino-6-(D-ribitylamino)uracil: step 1/2. Functionally, catalyzes the formation of 6,7-dimethyl-8-ribityllumazine by condensation of 5-amino-6-(D-ribitylamino)uracil with 3,4-dihydroxy-2-butanone 4-phosphate. This is the penultimate step in the biosynthesis of riboflavin. This Xanthobacter autotrophicus (strain ATCC BAA-1158 / Py2) protein is 6,7-dimethyl-8-ribityllumazine synthase.